We begin with the raw amino-acid sequence, 501 residues long: MEPGPSVSPGPSRSFKEELLCAVCYDPFRDAVTLRCGHNFCRRCVSGCWEVQTTPSCPVCKERAVPGELRTNHTLNNLVETLLREEAEGARWTGRRSPRPCRAHRAPLTLFCLEDKELLCCACQADARHQEHRVQPIKDTAQDFRAKCKNMEHVLREKAKAFWALRRTYEAIAKHNEVQTTWLEGRIRDEFDKLRDFLRVEEQATLDAMKEESRKKHLQAEEKMKQLAEQTEALAREIERLQMEMKEDDMTFLMKHKSRKRRLFCTVEPAPLQPGLLMDACKYLESLQYRVWKKMLGSVESVPFSLDPNTAAGWLKVADDLTSVINHGYRVQVENPERFSSAPCLLGSQVFSKGSHSWEVDVGGLPTWRVGVVRVQAHAQAQAQADVGGEGHSHSCYHDTRSGFWYLCRTQGVDGDHCMTSDTATAPLVQAMPRRLRVELECEEGELSFYDSERHCHLYTFHAHFGEVRPYFYLGASRGDGPPEPLRICHLRVSIKEELDI.

At methionine 1 the chain carries N-acetylmethionine. Serine 8 is subject to Phosphoserine. The RING-type zinc finger occupies 21 to 61 (CAVCYDPFRDAVTLRCGHNFCRRCVSGCWEVQTTPSCPVCK). Residues 96-137 (RSPRPCRAHRAPLTLFCLEDKELLCCACQADARHQEHRVQPI) form a B box-type zinc finger. Zn(2+) contacts are provided by cysteine 101, histidine 104, cysteine 123, and histidine 129. Residues 200-252 (VEEQATLDAMKEESRKKHLQAEEKMKQLAEQTEALAREIERLQMEMKEDDMTF) are a coiled coil. In terms of domain architecture, B30.2/SPRY spans 284 to 495 (LESLQYRVWK…LRICHLRVSI (212 aa)).

The protein belongs to the TRIM/RBCC family. As to quaternary structure, interacts with PKM isoform M2, but not isoform M1; this interaction may compete with that between PKM and FGFR1, and hence reduces FGFR1-dependent tyrosine phosphorylation of PKM. Interacts with IRF7; this interaction promotes IRF7 proteasomal degradation. Interacts with TRAF3; this interaction promotes TRAF3 activation. As to expression, widely expressed. Highly expressed in brain, heart, kidney, spleen, skeletal muscle, lung and thymus. Lower expression found in stomach, large intestine and bone marrow.

It is found in the cytoplasm. The protein resides in the nucleus. It catalyses the reaction S-ubiquitinyl-[E2 ubiquitin-conjugating enzyme]-L-cysteine + [acceptor protein]-L-lysine = [E2 ubiquitin-conjugating enzyme]-L-cysteine + N(6)-ubiquitinyl-[acceptor protein]-L-lysine.. Its pathway is protein modification; protein ubiquitination. In terms of biological role, E3 ubiquitin-protein ligase that participates in multiple biological processes including cell death, glucose metabolism, and in particular, the innate immune response. Mediates 'Lys-63'-linked polyubiquitination of TRAF3 thereby promoting type I interferon production via RIG-I signaling pathway. Can also catalyze 'Lys-48'-linked polyubiquitination and proteasomal degradation of viral proteins such as influenza virus PB2. Acts as a negative feedback regulator of TLR7- and TLR9-triggered signaling. Mechanistically, promotes the 'Lys-48'-linked ubiquitination of IRF7 and induces its degradation via a proteasome-dependent pathway. Reduces FGFR1-dependent tyrosine phosphorylation of PKM, inhibiting PKM-dependent lactate production, glucose metabolism, and cell growth. The protein is E3 ubiquitin-protein ligase TRIM35 (Trim35) of Mus musculus (Mouse).